The chain runs to 788 residues: Diacylglycerol kinase gamma (788 aa).

Positions 83 to 93 (PRQETPDHPKE) are enriched in basic and acidic residues. The segment at 83–150 (PRQETPDHPK…WGEPNAPASS (68 aa)) is disordered. Residues 95–109 (ASSSEPNVSDSNAES) are compositionally biased toward polar residues. EF-hand domains lie at 172–207 (RPQD…MLHV) and 217–252 (ELRP…TIPL). Residues Asp-185, Asp-187, Asn-189, Glu-196, Asp-230, Asn-232, Asp-234, and Glu-241 each contribute to the Ca(2+) site. Phorbol-ester/DAG-type zinc fingers lie at residues 268 to 318 (RHAW…IPGC) and 333 to 380 (QHAW…STAC). Positions 427–561 (PGTHPLLVLV…LDRWYLEVMP (135 aa)) constitute a DAGKc domain. The disordered stretch occupies residues 768–788 (MMGPPQKSSFFSLRRKSRSKD).

This sequence belongs to the eukaryotic diacylglycerol kinase family. Expressed specifically in brain. Highly expressed in cerebellar Purkinje cells (at protein level).

The protein resides in the membrane. Its subcellular location is the cytoplasm. It localises to the cytosol. The protein localises to the cytoskeleton. The catalysed reaction is a 1,2-diacyl-sn-glycerol + ATP = a 1,2-diacyl-sn-glycero-3-phosphate + ADP + H(+). It catalyses the reaction 1,2-didecanoyl-sn-glycerol + ATP = 1,2-didecanoyl-sn-glycero-3-phosphate + ADP + H(+). The enzyme catalyses 1,2-di-(9Z-octadecenoyl)-sn-glycerol + ATP = 1,2-di-(9Z-octadecenoyl)-sn-glycero-3-phosphate + ADP + H(+). It carries out the reaction 1-octadecanoyl-2-(9Z,12Z)-octadecadienoyl-sn-glycerol + ATP = 1-octadecanoyl-2-(9Z,12Z-octadecadienoyl)-sn-glycero-3-phosphate + ADP + H(+). The catalysed reaction is 1-octadecanoyl-2-(5Z,8Z,11Z,14Z-eicosatetraenoyl)-sn-glycerol + ATP = 1-octadecanoyl-2-(5Z,8Z,11Z,14Z-eicosatetraenoyl)-sn-glycero-3-phosphate + ADP + H(+). The protein operates within lipid metabolism; glycerolipid metabolism. Its activity is regulated as follows. The activity is calcium-dependent. Requires phosphatidylserine for maximal activity. Its function is as follows. Diacylglycerol kinase that converts diacylglycerol/DAG into phosphatidic acid/phosphatidate/PA and regulates the respective levels of these two bioactive lipids. Thereby, acts as a central switch between the signaling pathways activated by these second messengers with different cellular targets and opposite effects in numerous biological processes. Has no apparent specificity with regard to the acyl compositions of diacylglycerol. Specifically expressed in the cerebellum where it controls the level of diacylglycerol which in turn regulates the activity of protein kinase C gamma. Through protein kinase C gamma, indirectly regulates the dendritic development of Purkinje cells, cerebellar long term depression and ultimately cerebellar motor coordination. This is Diacylglycerol kinase gamma (Dgkg) from Rattus norvegicus (Rat).